A 401-amino-acid chain; its full sequence is Imidazolonepropionase (401 aa).

The Fe(3+) site is built by His-66 and His-68. Positions 66 and 68 each coordinate Zn(2+). Arg-75, Tyr-138, and His-171 together coordinate 4-imidazolone-5-propanoate. Tyr-138 contributes to the N-formimidoyl-L-glutamate binding site. His-236 is a Fe(3+) binding site. His-236 contacts Zn(2+). Residue Gln-239 participates in 4-imidazolone-5-propanoate binding. Asp-311 contacts Fe(3+). Asp-311 provides a ligand contact to Zn(2+). Asn-313 and Gly-315 together coordinate N-formimidoyl-L-glutamate. Thr-316 is a binding site for 4-imidazolone-5-propanoate.

This sequence belongs to the metallo-dependent hydrolases superfamily. HutI family. Zn(2+) serves as cofactor. It depends on Fe(3+) as a cofactor.

The protein resides in the cytoplasm. The enzyme catalyses 4-imidazolone-5-propanoate + H2O = N-formimidoyl-L-glutamate. Its pathway is amino-acid degradation; L-histidine degradation into L-glutamate; N-formimidoyl-L-glutamate from L-histidine: step 3/3. In terms of biological role, catalyzes the hydrolytic cleavage of the carbon-nitrogen bond in imidazolone-5-propanoate to yield N-formimidoyl-L-glutamate. It is the third step in the universal histidine degradation pathway. This is Imidazolonepropionase from Pseudomonas putida (Arthrobacter siderocapsulatus).